Consider the following 254-residue polypeptide: tRNA (guanine-N(7)-)-methyltransferase (254 aa).

A disordered region spans residues 1-34 (MNTNTPAHPPEGAPLSEATQAALASAEHAPDSPG). Glutamate 87, glutamate 112, aspartate 139, and aspartate 162 together coordinate S-adenosyl-L-methionine. Aspartate 162 is a catalytic residue. Substrate contacts are provided by residues lysine 166, aspartate 198, and 233–236 (TKFE).

It belongs to the class I-like SAM-binding methyltransferase superfamily. TrmB family.

It carries out the reaction guanosine(46) in tRNA + S-adenosyl-L-methionine = N(7)-methylguanosine(46) in tRNA + S-adenosyl-L-homocysteine. It participates in tRNA modification; N(7)-methylguanine-tRNA biosynthesis. In terms of biological role, catalyzes the formation of N(7)-methylguanine at position 46 (m7G46) in tRNA. The chain is tRNA (guanine-N(7)-)-methyltransferase from Bordetella bronchiseptica (strain ATCC BAA-588 / NCTC 13252 / RB50) (Alcaligenes bronchisepticus).